A 292-amino-acid chain; its full sequence is 33 kDa chaperonin (292 aa).

2 cysteine pairs are disulfide-bonded: Cys230–Cys232 and Cys263–Cys266.

The protein belongs to the HSP33 family. Under oxidizing conditions two disulfide bonds are formed involving the reactive cysteines. Under reducing conditions zinc is bound to the reactive cysteines and the protein is inactive.

The protein resides in the cytoplasm. In terms of biological role, redox regulated molecular chaperone. Protects both thermally unfolding and oxidatively damaged proteins from irreversible aggregation. Plays an important role in the bacterial defense system toward oxidative stress. The sequence is that of 33 kDa chaperonin from Escherichia coli O7:K1 (strain IAI39 / ExPEC).